Here is a 317-residue protein sequence, read N- to C-terminus: Tyrosine--tRNA ligase (317 aa).

Position 32 (Tyr32) interacts with L-tyrosine. The 'HIGH' region signature appears at 37–45; sequence PSGEIHLGH. Tyr152, Gln156, Asp159, and Gln174 together coordinate L-tyrosine. A 'KMSKS' region motif is present at residues 208–212; that stretch reads KMSSS. An ATP-binding site is contributed by Ser211.

Belongs to the class-I aminoacyl-tRNA synthetase family. TyrS type 3 subfamily. In terms of assembly, homodimer.

The protein resides in the cytoplasm. It carries out the reaction tRNA(Tyr) + L-tyrosine + ATP = L-tyrosyl-tRNA(Tyr) + AMP + diphosphate + H(+). Its function is as follows. Catalyzes the attachment of tyrosine to tRNA(Tyr) in a two-step reaction: tyrosine is first activated by ATP to form Tyr-AMP and then transferred to the acceptor end of tRNA(Tyr). This is Tyrosine--tRNA ligase from Methanocorpusculum labreanum (strain ATCC 43576 / DSM 4855 / Z).